We begin with the raw amino-acid sequence, 428 residues long: Serine--tRNA ligase (428 aa).

Position 231 to 233 (231 to 233 (TAE)) interacts with L-serine. 262–264 (RAE) contacts ATP. An L-serine-binding site is contributed by Glu285. 349-352 (EISS) is an ATP binding site. Ser385 contributes to the L-serine binding site.

Belongs to the class-II aminoacyl-tRNA synthetase family. Type-1 seryl-tRNA synthetase subfamily. In terms of assembly, homodimer. The tRNA molecule binds across the dimer.

The protein localises to the cytoplasm. The catalysed reaction is tRNA(Ser) + L-serine + ATP = L-seryl-tRNA(Ser) + AMP + diphosphate + H(+). The enzyme catalyses tRNA(Sec) + L-serine + ATP = L-seryl-tRNA(Sec) + AMP + diphosphate + H(+). The protein operates within aminoacyl-tRNA biosynthesis; selenocysteinyl-tRNA(Sec) biosynthesis; L-seryl-tRNA(Sec) from L-serine and tRNA(Sec): step 1/1. Its function is as follows. Catalyzes the attachment of serine to tRNA(Ser). Is also able to aminoacylate tRNA(Sec) with serine, to form the misacylated tRNA L-seryl-tRNA(Sec), which will be further converted into selenocysteinyl-tRNA(Sec). The protein is Serine--tRNA ligase of Methylorubrum populi (strain ATCC BAA-705 / NCIMB 13946 / BJ001) (Methylobacterium populi).